A 170-amino-acid polypeptide reads, in one-letter code: Protein SprT (170 aa).

In terms of domain architecture, SprT-like spans 25–165 (SEQFFDRTFA…QYCKGRLEPV (141 aa)). A Zn(2+)-binding site is contributed by histidine 78. The active site involves glutamate 79. Histidine 82 contacts Zn(2+).

The protein belongs to the SprT family. Zn(2+) serves as cofactor.

Its subcellular location is the cytoplasm. In Actinobacillus succinogenes (strain ATCC 55618 / DSM 22257 / CCUG 43843 / 130Z), this protein is Protein SprT.